Here is a 217-residue protein sequence, read N- to C-terminus: Probable transaldolase (217 aa).

The Schiff-base intermediate with substrate role is filled by Lys83.

It belongs to the transaldolase family. Type 3B subfamily.

It localises to the cytoplasm. The catalysed reaction is D-sedoheptulose 7-phosphate + D-glyceraldehyde 3-phosphate = D-erythrose 4-phosphate + beta-D-fructose 6-phosphate. It participates in carbohydrate degradation; pentose phosphate pathway; D-glyceraldehyde 3-phosphate and beta-D-fructose 6-phosphate from D-ribose 5-phosphate and D-xylulose 5-phosphate (non-oxidative stage): step 2/3. Its function is as follows. Transaldolase is important for the balance of metabolites in the pentose-phosphate pathway. The sequence is that of Probable transaldolase from Brucella anthropi (strain ATCC 49188 / DSM 6882 / CCUG 24695 / JCM 21032 / LMG 3331 / NBRC 15819 / NCTC 12168 / Alc 37) (Ochrobactrum anthropi).